A 930-amino-acid polypeptide reads, in one-letter code: Protein ARABIDILLO 1 (930 aa).

A Nuclear localization signal motif is present at residues 3–8 (RRVRRK). The 47-residue stretch at 44–90 (FVDWISLPYDTVLQLFTCLNYRDRASLASTCKTWRCLGASSCLWTSL) folds into the F-box domain. 13 ARM repeats span residues 172-212 (RITS…KHCP), 244-285 (TSNI…TSSQ), 379-418 (PEGL…TFVV), 428-467 (CGRA…NLSV), 469-508 (ANIA…NLSV), 510-552 (EEHK…NLAA), 554-594 (DKCS…NLAA), 600-639 (NNNA…NLSF), 641-683 (DKNR…GLSV), 685-724 (EANS…NLAF), 726-766 (PGNA…YMFD), 790-831 (LDGA…QVTE), and 835-875 (IQEA…QFTI).

It belongs to the beta-catenin family. Interacts with SNL1. Interacts with MYB53, MYB92 and MYB93. As to expression, expressed ubiquitously, with higher levels in root tip, pericycle and vasculature.

It localises to the nucleus. In terms of biological role, promotes lateral root initiation and development, independently of auxin (IAA) and abscisis acid (ABA). The polypeptide is Protein ARABIDILLO 1 (FBX5) (Arabidopsis thaliana (Mouse-ear cress)).